Here is a 227-residue protein sequence, read N- to C-terminus: PKHD-type hydroxylase BURPS668_A1690 (227 aa).

Positions 78 to 178 (KVFPPLFNRY…RVASFFWIQS (101 aa)) constitute a Fe2OG dioxygenase domain. Fe cation is bound by residues histidine 96, aspartate 98, and histidine 159. Residue arginine 169 participates in 2-oxoglutarate binding.

Fe(2+) is required as a cofactor. L-ascorbate serves as cofactor.

In Burkholderia pseudomallei (strain 668), this protein is PKHD-type hydroxylase BURPS668_A1690.